We begin with the raw amino-acid sequence, 682 residues long: Glucan endo-1,3-beta-glucosidase A1 (682 aa).

Positions 1–38 (MKPSHFTEKRFMKKVLGLFLVVVMLASVGVLPTSKVQA) are cleaved as a signal peptide. Positions 391-682 (YTFIGNPNAP…VDYVRVYKEQ (292 aa)) constitute a GH16 domain. The active-site Nucleophile is the Glu552. Glu557 serves as the catalytic Proton donor.

It belongs to the glycosyl hydrolase 16 family.

The protein resides in the secreted. The enzyme catalyses Hydrolysis of (1-&gt;3)-beta-D-glucosidic linkages in (1-&gt;3)-beta-D-glucans.. Its function is as follows. Lysis of cellular walls containing beta-1,3-glucans. Implicated in the defense against fungal pathogens. The chain is Glucan endo-1,3-beta-glucosidase A1 (glcA) from Niallia circulans (Bacillus circulans).